A 280-amino-acid polypeptide reads, in one-letter code: Protoheme IX farnesyltransferase 2 (280 aa).

Helical transmembrane passes span 12–32, 35–55, 76–96, 98–118, 129–149, 158–178, 199–221, 226–248, and 255–275; these read VIWL…GGVD, LFSL…FNHY, LITP…GISL, FLLL…FYAV, WLNI…GYAL, AVLI…ALAF, ERAV…WLYL, GAGG…YAAV, and MWKM…ALMI.

This sequence belongs to the UbiA prenyltransferase family. Protoheme IX farnesyltransferase subfamily.

It is found in the cell membrane. It carries out the reaction heme b + (2E,6E)-farnesyl diphosphate + H2O = Fe(II)-heme o + diphosphate. It functions in the pathway porphyrin-containing compound metabolism; heme O biosynthesis; heme O from protoheme: step 1/1. Functionally, converts heme B (protoheme IX) to heme O by substitution of the vinyl group on carbon 2 of heme B porphyrin ring with a hydroxyethyl farnesyl side group. The polypeptide is Protoheme IX farnesyltransferase 2 (Pyrobaculum aerophilum (strain ATCC 51768 / DSM 7523 / JCM 9630 / CIP 104966 / NBRC 100827 / IM2)).